Here is a 504-residue protein sequence, read N- to C-terminus: ATP synthase subunit alpha (504 aa).

Position 169–176 (169–176) interacts with ATP; the sequence is GDRQTGKT.

The protein belongs to the ATPase alpha/beta chains family. As to quaternary structure, F-type ATPases have 2 components, CF(1) - the catalytic core - and CF(0) - the membrane proton channel. CF(1) has five subunits: alpha(3), beta(3), gamma(1), delta(1), epsilon(1). CF(0) has three main subunits: a(1), b(2) and c(9-12). The alpha and beta chains form an alternating ring which encloses part of the gamma chain. CF(1) is attached to CF(0) by a central stalk formed by the gamma and epsilon chains, while a peripheral stalk is formed by the delta and b chains.

It is found in the cell membrane. The catalysed reaction is ATP + H2O + 4 H(+)(in) = ADP + phosphate + 5 H(+)(out). Produces ATP from ADP in the presence of a proton gradient across the membrane. The alpha chain is a regulatory subunit. This is ATP synthase subunit alpha from Clostridium kluyveri (strain ATCC 8527 / DSM 555 / NBRC 12016 / NCIMB 10680 / K1).